A 141-amino-acid polypeptide reads, in one-letter code: 16 kDa protein (141 aa).

A disordered region spans residues 97–119 (ASATVKKSHKSKPSKKKFKERKD). Basic residues predominate over residues 102 to 115 (KKSHKSKPSKKKFK).

The sequence is that of 16 kDa protein from Beta vulgaris (Sugar beet).